Consider the following 689-residue polypeptide: Calcium-responsive transcription factor (689 aa).

Disordered regions lie at residues 1–46 and 541–609; these read MEQR…PTIL and SPDG…SVPN. A compositionally biased stretch (basic and acidic residues) spans 13–29; the sequence is DGEKSEREAQGFEHRTC. 2 stretches are compositionally biased toward polar residues: residues 541 to 559 and 578 to 601; these read SPDG…SSSP and LGQS…SSTG.

Highly expressed in brain and testis.

It localises to the nucleus. Acts as a transcriptional activator that mediates the calcium- and neuron-selective induction of BDNF exon III transcription. Binds to the consensus calcium-response element CaRE1 5'-CTATTTCGAG-3' sequence. This Mus musculus (Mouse) protein is Calcium-responsive transcription factor (Carf).